The chain runs to 347 residues: MISNFDCTDNQASSKVLRPPGGGSSDIFGSEMPQTPRNVKNRMASNIFAAEKDNGVKNNVRQGAHRFYFIGDAPRRGQKTVDSHNRLFGEPARPITPGKNHMKSSIPFGQNTEAVASAQKLLTTNGHYNGKSGSVSSASSSVSSSTENLKMNSGSRSVFRNMSTAAGPDTKETSQRESLCPPSPVPIEVPTPPADSLPIDNSCRDSEVGDVPADNSTYTKSDQVNEACQTRRDSGNNPELPYSLDQMAGVANVKEPLGLCPNEVKEDAQACSKLDSRNPITGLGLNGDGVGGLKPKKLKIREGNPVTGEGYKAGGNDFHHRQESNNGGTPVINKNRIPPGGYSSGLW.

Positions 1–14 are enriched in polar residues; it reads MISNFDCTDNQASS. Residues 1–33 form a disordered region; that stretch reads MISNFDCTDNQASSKVLRPPGGGSSDIFGSEMP. At S24 the chain carries Phosphoserine. A phosphothreonine mark is found at T35 and T96. Residues S105, S134, and S145 each carry the phosphoserine modification. Disordered stretches follow at residues 127 to 193 and 303 to 347; these read HYNG…PTPP and GNPV…SGLW. Residues 132–145 show a composition bias toward low complexity; that stretch reads SGSVSSASSSVSSS. A compositionally biased stretch (polar residues) spans 146-164; that stretch reads TENLKMNSGSRSVFRNMST. Pro residues predominate over residues 181-193; sequence PPSPVPIEVPTPP.

This sequence belongs to the MAP Jupiter family.

The protein resides in the nucleus. It is found in the cytoplasm. Its subcellular location is the cytoskeleton. It localises to the spindle. Its function is as follows. Binds to all microtubule populations. The chain is Microtubule-associated protein Jupiter from Drosophila yakuba (Fruit fly).